Consider the following 298-residue polypeptide: Tyrosine recombinase XerD (298 aa).

Residues 3–88 enclose the Core-binding (CB) domain; sequence SSHNNLLQNF…AIRQFYKFLK (86 aa). Residues 109–292 form the Tyr recombinase domain; the sequence is SIPDYLTQDE…ANKTLREVHK (184 aa). Catalysis depends on residues arginine 149, lysine 173, histidine 244, arginine 247, and histidine 270. Tyrosine 279 acts as the O-(3'-phospho-DNA)-tyrosine intermediate in catalysis.

Belongs to the 'phage' integrase family. XerD subfamily. In terms of assembly, forms a cyclic heterotetrameric complex composed of two molecules of XerC and two molecules of XerD.

It is found in the cytoplasm. In terms of biological role, site-specific tyrosine recombinase, which acts by catalyzing the cutting and rejoining of the recombining DNA molecules. The XerC-XerD complex is essential to convert dimers of the bacterial chromosome into monomers to permit their segregation at cell division. It also contributes to the segregational stability of plasmids. The chain is Tyrosine recombinase XerD from Leptospira interrogans serogroup Icterohaemorrhagiae serovar copenhageni (strain Fiocruz L1-130).